The following is a 337-amino-acid chain: C5a anaphylatoxin chemotactic receptor 2 (337 aa).

Over 1–38 (MGNDSVSYEYGDYSDLSDRPVDCLDGACLAIDPLRVAP) the chain is Extracellular. The N-linked (GlcNAc...) asparagine glycan is linked to N3. A helical membrane pass occupies residues 39 to 61 (LPLYAAIFLVGVPGNAMVAWVAG). Topologically, residues 62–72 (KVARRRVGATW) are cytoplasmic. Residues 73 to 95 (LLHLAVADLLCCLSLPILAVPIA) traverse the membrane as a helical segment. Over 96–114 (RGGHWPYGAVGCRALPSII) the chain is Extracellular. The cysteines at positions 107 and 186 are disulfide-linked. Residues 115 to 137 (LLTMYASVLLLAALSADLCFLAL) traverse the membrane as a helical segment. Residues 138 to 149 (GPAWWSTVQRAC) are Cytoplasmic-facing. The chain crosses the membrane as a helical span at residues 150 to 172 (GVQVACGAAWTLALLLTVPSAIY). Residues 173 to 202 (RRLHQEHFPARLQCVVDYGGSSSTENAVTA) lie on the Extracellular side of the membrane. A helical membrane pass occupies residues 203–225 (IRFLFGFLGPLVAVASCHSALLC). Topologically, residues 226-237 (WAARRCRPLGTA) are cytoplasmic. The helical transmembrane segment at 238–260 (IVVGFFVCWAPYHLLGLVLTVAA) threads the bilayer. Residues 261–274 (PNSALLARALRAEP) are Extracellular-facing. Residues 275–294 (LIVGLALAHSCLNPMLFLYF) traverse the membrane as a helical segment. At 295–337 (GRAQLRRSLPAACHWALRESQGQDESVDSKKSTSHDLVSEMEV) the chain is on the cytoplasmic side. A Phosphoserine modification is found at S320.

Belongs to the G-protein coupled receptor 1 family. In terms of assembly, interacts with C3 (the anaphylatoxin peptide C3a and the adipogenic hormone ASP); the interaction occurs with higher affinity for ASP, enhancing the phosphorylation and activation of GPR77, recruitment of ARRB2 to the cell surface and endocytosis of GRP77. Frontal cortex, hippocampus, hypothalamus, pons and liver.

The protein localises to the cell membrane. Receptor for the chemotactic and inflammatory C3a, C4a and C5a anaphylatoxin peptides and also for their dearginated forms ASP/C3adesArg, C4adesArg and C5adesArg respectively. Couples weakly to G(i)-mediated signaling pathways. This is C5a anaphylatoxin chemotactic receptor 2 (C5AR2) from Homo sapiens (Human).